The following is a 218-amino-acid chain: Large ribosomal subunit protein uL3 (218 aa).

2 disordered regions span residues 128 to 167 and 199 to 218; these read FSRG…RMGG and SLLN…QGGK.

It belongs to the universal ribosomal protein uL3 family. Part of the 50S ribosomal subunit. Forms a cluster with proteins L14 and L19.

In terms of biological role, one of the primary rRNA binding proteins, it binds directly near the 3'-end of the 23S rRNA, where it nucleates assembly of the 50S subunit. In Prochlorococcus marinus (strain NATL2A), this protein is Large ribosomal subunit protein uL3.